Consider the following 154-residue polypeptide: Transcriptional regulator MraZ (154 aa).

SpoVT-AbrB domains are found at residues 6–53 (NSEA…PENV) and 83–126 (VEVI…SKEI).

This sequence belongs to the MraZ family. In terms of assembly, forms oligomers.

The protein localises to the cytoplasm. It is found in the nucleoid. The chain is Transcriptional regulator MraZ from Phocaeicola vulgatus (strain ATCC 8482 / DSM 1447 / JCM 5826 / CCUG 4940 / NBRC 14291 / NCTC 11154) (Bacteroides vulgatus).